We begin with the raw amino-acid sequence, 100 residues long: Probable antitoxin MazE1 (100 aa).

The segment at 77-100 is disordered; that stretch reads PYESEAERSAARARRNARQQRSAQ.

In terms of assembly, forms a complex with cognate toxin MazF1.

Its function is as follows. Probable antitoxin component of a type II toxin-antitoxin (TA) system. Labile antitoxin that binds to cognate MazF1 toxin and counteracts its endoribonuclease activity. This is Probable antitoxin MazE1 (mazE1) from Mycobacterium bovis (strain ATCC BAA-935 / AF2122/97).